Reading from the N-terminus, the 104-residue chain is Complex III assembly factor LYRM7 (104 aa).

The protein belongs to the complex I LYR family. Interacts with UQCRFS1.

It localises to the mitochondrion matrix. Assembly factor required for Rieske Fe-S protein UQCRFS1 incorporation into the cytochrome b-c1 (CIII) complex. Functions as a chaperone, binding to this subunit within the mitochondrial matrix and stabilizing it prior to its translocation and insertion into the late CIII dimeric intermediate within the mitochondrial inner membrane. This chain is Complex III assembly factor LYRM7 (LYRM7), found in Danio rerio (Zebrafish).